The following is a 347-amino-acid chain: Quinolinate synthase (347 aa).

H47 and S68 together coordinate iminosuccinate. C113 is a binding site for [4Fe-4S] cluster. Iminosuccinate is bound by residues 139–141 (YAN) and S156. C200 provides a ligand contact to [4Fe-4S] cluster. Residues 226-228 (HPE) and T243 each bind iminosuccinate. C297 provides a ligand contact to [4Fe-4S] cluster.

Belongs to the quinolinate synthase family. Type 1 subfamily. The cofactor is [4Fe-4S] cluster.

It is found in the cytoplasm. It catalyses the reaction iminosuccinate + dihydroxyacetone phosphate = quinolinate + phosphate + 2 H2O + H(+). It participates in cofactor biosynthesis; NAD(+) biosynthesis; quinolinate from iminoaspartate: step 1/1. Catalyzes the condensation of iminoaspartate with dihydroxyacetone phosphate to form quinolinate. This chain is Quinolinate synthase, found in Salmonella gallinarum (strain 287/91 / NCTC 13346).